The sequence spans 154 residues: uncharacterized protein (154 aa).

The segment at 104-124 (NNNNNDNDNNNKEKEDNDEKE) is disordered. Over residues 112–124 (NNNKEKEDNDEKE) the composition is skewed to basic and acidic residues.

This is an uncharacterized protein from Dictyostelium discoideum (Social amoeba).